The primary structure comprises 356 residues: MQPSTLQALAKRALATQHVSKDDYYILERCGLWWHEAPISIYIDDDNQIMIRTLCFKEGIKLNTALVLAVKENNEDLIMLFTEWGANINYGLLFINNEHTRNLCRKLGAKEELETSEILRFFFETKCKITSSNVILCHELFSNNPFLQNVNMVDLRMIIYWELKDLPTNSMLNEISFSEMLTKYWYGIAVKYNLKEAIQYFCQEYRHFDEWRLICALSFNNVFDLHEICNTTKIHMSINKMMELACMRDNNFLTIYYCFALGANANRAMLISVKNFCIENMFFCMDLGANVIEHSKTLADIYGYSIIVNILSLKIYKANPILLSKETNPEKINTLLKNYYSKNMLAYDICCIDNYL.

An ANK repeat occupies 61–93; sequence KLNTALVLAVKENNEDLIMLFTEWGANINYGLL.

Belongs to the asfivirus MGF 360 family.

Its function is as follows. Plays a role in virus cell tropism, and may be required for efficient virus replication in macrophages. This chain is Protein MGF 360-3L, found in African swine fever virus (strain Badajoz 1971 Vero-adapted) (Ba71V).